The following is a 232-amino-acid chain: 2,3,4,5-tetrahydropyridine-2,6-dicarboxylate N-acetyltransferase (232 aa).

Belongs to the transferase hexapeptide repeat family. DapH subfamily.

It catalyses the reaction (S)-2,3,4,5-tetrahydrodipicolinate + acetyl-CoA + H2O = L-2-acetamido-6-oxoheptanedioate + CoA. The protein operates within amino-acid biosynthesis; L-lysine biosynthesis via DAP pathway; LL-2,6-diaminopimelate from (S)-tetrahydrodipicolinate (acetylase route): step 1/3. Functionally, catalyzes the transfer of an acetyl group from acetyl-CoA to tetrahydrodipicolinate. The sequence is that of 2,3,4,5-tetrahydropyridine-2,6-dicarboxylate N-acetyltransferase from Streptococcus pneumoniae serotype 2 (strain D39 / NCTC 7466).